Here is a 143-residue protein sequence, read N- to C-terminus: Nucleoside diphosphate kinase (143 aa).

ATP-binding residues include K11, F59, R87, T93, R104, and N114. H117 acts as the Pros-phosphohistidine intermediate in catalysis.

The protein belongs to the NDK family. Homotetramer. The cofactor is Mg(2+).

The protein localises to the cytoplasm. It carries out the reaction a 2'-deoxyribonucleoside 5'-diphosphate + ATP = a 2'-deoxyribonucleoside 5'-triphosphate + ADP. The enzyme catalyses a ribonucleoside 5'-diphosphate + ATP = a ribonucleoside 5'-triphosphate + ADP. Its function is as follows. Major role in the synthesis of nucleoside triphosphates other than ATP. The ATP gamma phosphate is transferred to the NDP beta phosphate via a ping-pong mechanism, using a phosphorylated active-site intermediate. The chain is Nucleoside diphosphate kinase from Pseudoalteromonas atlantica (strain T6c / ATCC BAA-1087).